The following is a 461-amino-acid chain: UDP-glycosyltransferase 88B1 (461 aa).

UDP-alpha-D-glucose is bound by residues Ser-278, Trp-340–Ala-341, His-358–Glu-366, and Tyr-380–Gln-383.

This sequence belongs to the UDP-glycosyltransferase family.

In terms of biological role, may glycosylate diterpenes or flavonols in leaves. In Stevia rebaudiana (Stevia), this protein is UDP-glycosyltransferase 88B1.